The chain runs to 582 residues: Enhancer of polycomb-like protein 1 (582 aa).

A coiled-coil region spans residues 238–295 (RDAQSADKLRRLRKELEDARQLVALVRQRELARKEMLSMERQIFLQRSEVKEMKRKLN). The disordered stretch occupies residues 323 to 351 (PEQPKKKPAEAPAAQRPTAPQIRMPQKPG). Residues 352 to 385 (TQAADDMQLLEDVQAEKENEILRDIKQNIAKHIK) adopt a coiled-coil conformation. The span at 539 to 555 (AQAHAQAQAQKRLQAEQ) shows a compositional bias: low complexity. The segment at 539-582 (AQAHAQAQAQKRLQAEQTTTNNGPPNIGHTMGSNPGPGAVASTS) is disordered.

This sequence belongs to the enhancer of polycomb family. As to quaternary structure, component of the NuA4 histone acetyltransferase complex.

The protein resides in the nucleus. In terms of biological role, component of the NuA4 histone acetyltransferase complex which is involved in transcriptional activation of selected genes principally by acetylation of nucleosomal histone H4 and H2A. The NuA4 complex is also involved in DNA repair. Involved in gene silencing by neighboring heterochromatin, blockage of the silencing spreading along the chromosome, and required for cell cycle progression through G2/M. The chain is Enhancer of polycomb-like protein 1 (epl1) from Aspergillus fumigatus (strain ATCC MYA-4609 / CBS 101355 / FGSC A1100 / Af293) (Neosartorya fumigata).